A 265-amino-acid polypeptide reads, in one-letter code: Capsule polysaccharide export inner-membrane protein CtrC (265 aa).

A run of 6 helical transmembrane segments spans residues 37–57 (IGFL…VLMW), 67–84 (TLNI…LMMW), 121–141 (IAGA…IGWI), 148–168 (FYML…GLVI), 178–198 (FGKI…AFFF), and 238–258 (WYIV…VSKF). Residues 37–258 (IGFLWLFVEP…LFGLAMVSKF (222 aa)) form the ABC transmembrane type-2 domain.

This sequence belongs to the ABC-2 integral membrane protein family.

The protein resides in the cell inner membrane. In terms of biological role, may form an ATP-driven capsule polysaccharide export apparatus, in association with the CtrB and CtrD proteins. This chain is Capsule polysaccharide export inner-membrane protein CtrC (ctrC), found in Neisseria meningitidis serogroup B (strain ATCC BAA-335 / MC58).